The sequence spans 439 residues: MRNGMRKIIAGVFIFVFLISNLYADLVAEVTTGVIQKPLVTVVSDNVVDQFPQQVNSVIVADLNHNAKLQANDTIKYEIKQKQNIPWKSLKSDYVVLTKYTNNSYNNYTVEVQILKRNDTSYLQAITYKNINVSLMRTLAHKISNYVYQKLTGNQGFFLTKLAYVKVSNPYARYGRLYELIISDYDGYNKHVVLRQTDNPIATPSWSNDGRYIVYSSYSGGSMGVYTLEIATGKVTRITNYKGINSSPSFSPDGKEIALALSKGYSDQTNIYIMNLSTKALKRITINGINTAPKFSPNGQSIVFTSDREGRPNIYVASVNSKYPQSSILSTKIHQAYEPNYTPDGKNIVFMNQSSRTSGTQIADFNLANGSVTNITNGKADSSPTVSPYGDMVAYISTNTRGYSSLDMVSLDGDNHFNIETADNGNILIQSPSWSPKNF.

The signal sequence occupies residues Met1–Ala24.

It belongs to the TolB family. As to quaternary structure, the Tol-Pal system is composed of five core proteins: the inner membrane proteins TolA, TolQ and TolR, the periplasmic protein TolB and the outer membrane protein Pal. They form a network linking the inner and outer membranes and the peptidoglycan layer.

It localises to the periplasm. In terms of biological role, part of the Tol-Pal system, which plays a role in outer membrane invagination during cell division and is important for maintaining outer membrane integrity. This is Tol-Pal system protein TolB from Francisella tularensis subsp. tularensis (strain FSC 198).